A 385-amino-acid chain; its full sequence is Acetylornithine deacetylase (385 aa).

Histidine 80 serves as a coordination point for Zn(2+). The active site involves aspartate 82. Position 112 (aspartate 112) interacts with Zn(2+). Glutamate 144 functions as the Proton acceptor in the catalytic mechanism. Zn(2+) contacts are provided by glutamate 145, glutamate 169, and histidine 355.

It belongs to the peptidase M20A family. ArgE subfamily. Homodimer. Zn(2+) is required as a cofactor. Co(2+) serves as cofactor. Requires glutathione as cofactor.

It localises to the cytoplasm. It catalyses the reaction N(2)-acetyl-L-ornithine + H2O = L-ornithine + acetate. The protein operates within amino-acid biosynthesis; L-arginine biosynthesis; L-ornithine from N(2)-acetyl-L-ornithine (linear): step 1/1. In terms of biological role, catalyzes the hydrolysis of the amide bond of N(2)-acetylated L-amino acids. Cleaves the acetyl group from N-acetyl-L-ornithine to form L-ornithine, an intermediate in L-arginine biosynthesis pathway, and a branchpoint in the synthesis of polyamines. The polypeptide is Acetylornithine deacetylase (Photorhabdus laumondii subsp. laumondii (strain DSM 15139 / CIP 105565 / TT01) (Photorhabdus luminescens subsp. laumondii)).